A 316-amino-acid chain; its full sequence is Ribosomal protein L11 methyltransferase (316 aa).

S-adenosyl-L-methionine-binding residues include threonine 159, glycine 179, aspartate 201, and asparagine 243.

This sequence belongs to the methyltransferase superfamily. PrmA family.

Its subcellular location is the cytoplasm. It catalyses the reaction L-lysyl-[protein] + 3 S-adenosyl-L-methionine = N(6),N(6),N(6)-trimethyl-L-lysyl-[protein] + 3 S-adenosyl-L-homocysteine + 3 H(+). Methylates ribosomal protein L11. This Gloeobacter violaceus (strain ATCC 29082 / PCC 7421) protein is Ribosomal protein L11 methyltransferase.